Reading from the N-terminus, the 538-residue chain is Small ribosomal subunit protein uS3m (538 aa).

A disordered region spans residues 111 to 134 (SSEGTEEERNEVRGRGAGKRVESI). The segment covering 120 to 134 (NEVRGRGAGKRVESI) has biased composition (basic and acidic residues).

Belongs to the universal ribosomal protein uS3 family.

Its subcellular location is the mitochondrion. This is Small ribosomal subunit protein uS3m (RPS3) from Oryza sativa subsp. japonica (Rice).